The primary structure comprises 221 residues: Histidine biosynthesis bifunctional protein HisIE (221 aa).

The interval 1 to 129 is phosphoribosyl-AMP cyclohydrolase; the sequence is MAYSKNFSIE…AKKTSPFSNI (129 aa). The phosphoribosyl-ATP pyrophosphohydrolase stretch occupies residues 130–221; it reads CSELFDTLHE…VLESRRGKNN (92 aa).

In the N-terminal section; belongs to the PRA-CH family. The protein in the C-terminal section; belongs to the PRA-PH family.

It localises to the cytoplasm. The catalysed reaction is 1-(5-phospho-beta-D-ribosyl)-ATP + H2O = 1-(5-phospho-beta-D-ribosyl)-5'-AMP + diphosphate + H(+). It carries out the reaction 1-(5-phospho-beta-D-ribosyl)-5'-AMP + H2O = 1-(5-phospho-beta-D-ribosyl)-5-[(5-phospho-beta-D-ribosylamino)methylideneamino]imidazole-4-carboxamide. It participates in amino-acid biosynthesis; L-histidine biosynthesis; L-histidine from 5-phospho-alpha-D-ribose 1-diphosphate: step 2/9. It functions in the pathway amino-acid biosynthesis; L-histidine biosynthesis; L-histidine from 5-phospho-alpha-D-ribose 1-diphosphate: step 3/9. This is Histidine biosynthesis bifunctional protein HisIE from Prochlorococcus marinus subsp. pastoris (strain CCMP1986 / NIES-2087 / MED4).